Reading from the N-terminus, the 260-residue chain is tRNA pseudouridine synthase A (260 aa).

D60 acts as the Nucleophile in catalysis. Y118 contacts substrate.

This sequence belongs to the tRNA pseudouridine synthase TruA family. In terms of assembly, homodimer.

It catalyses the reaction uridine(38/39/40) in tRNA = pseudouridine(38/39/40) in tRNA. Functionally, formation of pseudouridine at positions 38, 39 and 40 in the anticodon stem and loop of transfer RNAs. The protein is tRNA pseudouridine synthase A of Leuconostoc citreum (strain KM20).